Consider the following 340-residue polypeptide: Trimethylamine N-oxide transport system ATP-binding protein TmoW (340 aa).

The ABC transporter domain maps to 32–268 (GRSFDDIRAD…PTTGYVAKFT (237 aa)). 64–71 (GLSGSGKS) provides a ligand contact to ATP.

It belongs to the ABC transporter superfamily. In terms of assembly, the complex is probably composed of two ATP-binding proteins (TmoW), two transmembrane proteins (TmoV) and a solute-binding protein (TmoX).

It localises to the cell inner membrane. It catalyses the reaction a quaternary ammonium(out) + ATP + H2O = a quaternary ammonium(in) + ADP + phosphate + H(+). Its function is as follows. Part of the ABC transporter complex TmoXWV involved in trimethylamine N-oxide (TMAO) import. Responsible for energy coupling to the transport system. Is specific for TMAO and essential for TMAO metabolism. The sequence is that of Trimethylamine N-oxide transport system ATP-binding protein TmoW from Ruegeria pomeroyi (strain ATCC 700808 / DSM 15171 / DSS-3) (Silicibacter pomeroyi).